The primary structure comprises 462 residues: Chromosomal replication initiator protein DnaA (462 aa).

The interval 1–84 is domain I, interacts with DnaA modulators; the sequence is MAVSLWQQCI…RFDIGSRPSA (84 aa). Residues 84 to 125 form a domain II region; the sequence is APRPVQATAAVERPKFEQNTKPAKTSFNVNSPEPAMAANHRS. The tract at residues 126 to 342 is domain III, AAA+ region; it reads NINRTYQFEN…GALNRVIANA (217 aa). 4 residues coordinate ATP: G170, G172, K173, and T174. A domain IV, binds dsDNA region spans residues 343–462; it reads NFTGRPITID…YANLIRTLSS (120 aa).

The protein belongs to the DnaA family. Oligomerizes as a right-handed, spiral filament on DNA at oriC.

It localises to the cytoplasm. Its function is as follows. Plays an essential role in the initiation and regulation of chromosomal replication. ATP-DnaA binds to the origin of replication (oriC) to initiate formation of the DNA replication initiation complex once per cell cycle. Binds the DnaA box (a 9 base pair repeat at the origin) and separates the double-stranded (ds)DNA. Forms a right-handed helical filament on oriC DNA; dsDNA binds to the exterior of the filament while single-stranded (ss)DNA is stabiized in the filament's interior. The ATP-DnaA-oriC complex binds and stabilizes one strand of the AT-rich DNA unwinding element (DUE), permitting loading of DNA polymerase. After initiation quickly degrades to an ADP-DnaA complex that is not apt for DNA replication. Binds acidic phospholipids. The protein is Chromosomal replication initiator protein DnaA of Shewanella sediminis (strain HAW-EB3).